The sequence spans 140 residues: Sperm protein associated with the nucleus on the X chromosome N3 (140 aa).

Composition is skewed to polar residues over residues 1-20 (MEQP…CKSN), 62-79 (INSN…SINP), and 131-140 (EGSSQDSGED). The segment at 1–140 (MEQPTSSTNG…EGSSQDSGED (140 aa)) is disordered.

This sequence belongs to the SPAN-X family.

The chain is Sperm protein associated with the nucleus on the X chromosome N3 (SPANXN3) from Pan troglodytes (Chimpanzee).